Here is a 79-residue protein sequence, read N- to C-terminus: Morintide mO2 (79 aa).

Positions 1 to 20 (MAKLSFLSLFLLCLVATATA) are cleaved as a signal peptide. The region spanning 21-63 (QNCGRQAGNRACANGLCCSQYGFCGSTSEYCSRANGCQSNCRG) is the Chitin-binding type-1 domain. 4 disulfides stabilise this stretch: C23–C38, C32–C44, C37–C51, and C57–C61. A propeptide spanning residues 64 to 79 (GGGAGGAGGGAGGGSP) is cleaved from the precursor.

Leaves (at protein level).

In terms of biological role, chitin-binding protein which functions in defense against chitin-containing fungal pathogens. In Moringa oleifera (Horseradish tree), this protein is Morintide mO2.